The sequence spans 689 residues: Glycine--tRNA ligase beta subunit (689 aa).

This sequence belongs to the class-II aminoacyl-tRNA synthetase family. As to quaternary structure, tetramer of two alpha and two beta subunits.

Its subcellular location is the cytoplasm. It catalyses the reaction tRNA(Gly) + glycine + ATP = glycyl-tRNA(Gly) + AMP + diphosphate. The chain is Glycine--tRNA ligase beta subunit from Glaesserella parasuis serovar 5 (strain SH0165) (Haemophilus parasuis).